A 477-amino-acid chain; its full sequence is D-alanyl-D-alanine carboxypeptidase DacB (477 aa).

The first 20 residues, 1–20 (MRFSRFIIGLTSCIAFSVQA), serve as a signal peptide directing secretion. Catalysis depends on S62, which acts as the Acyl-ester intermediate. K65 serves as the catalytic Proton acceptor. The segment at 90–263 (GNVENGVLKG…YAGAILKDEL (174 aa)) is absent in class-A beta-lactamases. S306 is a catalytic residue. K417 is a binding site for substrate.

It belongs to the peptidase S13 family.

It is found in the periplasm. It catalyses the reaction Preferential cleavage: (Ac)2-L-Lys-D-Ala-|-D-Ala. Also transpeptidation of peptidyl-alanyl moieties that are N-acyl substituents of D-alanine.. It participates in cell wall biogenesis; peptidoglycan biosynthesis. Its function is as follows. Not involved in transpeptidation but exclusively catalyzes a DD-carboxypeptidase and DD-endopeptidase reaction. This is D-alanyl-D-alanine carboxypeptidase DacB (dacB) from Escherichia coli (strain K12).